The chain runs to 42 residues: Tachystatin-B2 (42 aa).

Cystine bridges form between Cys-4-Cys-20, Cys-11-Cys-25, and Cys-19-Cys-37.

As to expression, granular hemocytes, small secretory granules.

It localises to the secreted. Exhibits stronger antimicrobial activity against the Gram-positive bacteria (S.aureus (IC(50) is 7.4 ug/ml)) and fungi (C.albicans (IC(50) is 3.0 ug/ml) and P.pastoris (IC(50) is 0.1 ug/ml)) than Gram-negative bacteria (E.coli no inhibition at 100 ug/ml). Binds to chitin (4.3 uM are required to obtain 50% of binding). Does not cause hemolysis on sheep erythrocytes. Has no blocking activity on the P-type calcium channel. This chain is Tachystatin-B2, found in Tachypleus tridentatus (Japanese horseshoe crab).